Consider the following 156-residue polypeptide: Ribosomal RNA large subunit methyltransferase H (156 aa).

Residues Leu73, Gly104, and 123 to 128 each bind S-adenosyl-L-methionine; that span reads ISSMTL.

Belongs to the RNA methyltransferase RlmH family. In terms of assembly, homodimer.

Its subcellular location is the cytoplasm. The catalysed reaction is pseudouridine(1915) in 23S rRNA + S-adenosyl-L-methionine = N(3)-methylpseudouridine(1915) in 23S rRNA + S-adenosyl-L-homocysteine + H(+). In terms of biological role, specifically methylates the pseudouridine at position 1915 (m3Psi1915) in 23S rRNA. The chain is Ribosomal RNA large subunit methyltransferase H from Burkholderia lata (strain ATCC 17760 / DSM 23089 / LMG 22485 / NCIMB 9086 / R18194 / 383).